Consider the following 605-residue polypeptide: Poly [ADP-ribose] polymerase 2-B (605 aa).

The tract at residues 96–122 (NAAAAAAVTDGGDQDKTKSAKDDDGDD) is disordered. Over residues 108–122 (DQDKTKSAKDDDGDD) the composition is skewed to basic and acidic residues. The WGR domain maps to 153-260 (AYHVLQVGDE…TKLETRTASF (108 aa)). Residues 250-370 (ETKLETRTAS…EIEIAIKLLE (121 aa)) form the PARP alpha-helical domain. In terms of domain architecture, PARP catalytic spans 378–605 (HPLYARYKQF…NVNFNFKRWG (228 aa)).

The protein belongs to the ARTD/PARP family.

The protein localises to the nucleus. The catalysed reaction is NAD(+) + (ADP-D-ribosyl)n-acceptor = nicotinamide + (ADP-D-ribosyl)n+1-acceptor + H(+).. It carries out the reaction L-aspartyl-[protein] + NAD(+) = 4-O-(ADP-D-ribosyl)-L-aspartyl-[protein] + nicotinamide. It catalyses the reaction L-glutamyl-[protein] + NAD(+) = 5-O-(ADP-D-ribosyl)-L-glutamyl-[protein] + nicotinamide. In terms of biological role, involved in the base excision repair (BER) pathway, by catalyzing the poly(ADP-ribosyl)ation of a limited number of acceptor proteins involved in chromatin architecture and in DNA metabolism. This modification follows DNA damages and appears as an obligatory step in a detection/signaling pathway leading to the reparation of DNA strand breaks. The protein is Poly [ADP-ribose] polymerase 2-B (PARP2-B) of Oryza sativa subsp. japonica (Rice).